We begin with the raw amino-acid sequence, 368 residues long: Quinolinate synthase (368 aa).

Residues His-46 and Ser-63 each contribute to the iminosuccinate site. [4Fe-4S] cluster is bound at residue Cys-110. Residues 141–143 and Ser-162 contribute to the iminosuccinate site; that span reads YVN. Position 230 (Cys-230) interacts with [4Fe-4S] cluster. Iminosuccinate contacts are provided by residues 256–258 and Thr-273; that span reads HPE. Cys-320 is a binding site for [4Fe-4S] cluster.

The protein belongs to the quinolinate synthase family. Type 3 subfamily. [4Fe-4S] cluster is required as a cofactor.

The protein localises to the cytoplasm. The catalysed reaction is iminosuccinate + dihydroxyacetone phosphate = quinolinate + phosphate + 2 H2O + H(+). The protein operates within cofactor biosynthesis; NAD(+) biosynthesis; quinolinate from iminoaspartate: step 1/1. In terms of biological role, catalyzes the condensation of iminoaspartate with dihydroxyacetone phosphate to form quinolinate. The sequence is that of Quinolinate synthase from Bacillus mycoides (strain KBAB4) (Bacillus weihenstephanensis).